The primary structure comprises 1398 residues: MAP-homologous protein 1 (1398 aa).

At methionine 1 the chain carries N-acetylmethionine. The segment at 21 to 77 (GWLVRPSASTSKSSRPGKSESKANSVAPDIQMDTARPPVFETSVDSSSSILSSNDKG) is disordered. Over residues 27–36 (SASTSKSSRP) the composition is skewed to polar residues. Low complexity predominate over residues 63–73 (SVDSSSSILSS). Serine 81 carries the phosphoserine modification. 3 disordered regions span residues 90 to 144 (NQRA…APAP), 156 to 186 (HRKK…GAAI), and 191 to 210 (TATI…PPSY). Polar residues-rich tracts occupy residues 91–102 (QRANAGSTSVPT) and 114–123 (VVETNLSNVE). Residues 159 to 186 (KDQEQQEKERERKERSPSPTHVDRGAAI) are compositionally biased toward basic and acidic residues. Lysine 221 is covalently cross-linked (Glycyl lysine isopeptide (Lys-Gly) (interchain with G-Cter in ubiquitin)). Threonine 222 is modified (phosphothreonine). Disordered regions lie at residues 244 to 270 (HSPE…PDPR), 296 to 382 (SSAS…PSSH), 395 to 428 (GNNN…SSME), and 515 to 548 (NPEE…NNSQ). Phosphoserine occurs at positions 309, 311, 354, and 357. Residues 357-371 (SIVDTVDSNSDVSSS) show a composition bias toward low complexity. Residues 372–381 (AQNNNQTPSS) show a composition bias toward polar residues. Over residues 396 to 426 (NNNNNSTNASSLSANVNNPDTSSTSLWSSSS) the composition is skewed to low complexity. A compositionally biased stretch (basic and acidic residues) spans 521 to 538 (ANAKSKEEMAPQKQNEVE). Phosphothreonine is present on threonine 577. Residues 605–615 (STSSLASMVSS) show a composition bias toward low complexity. Disordered stretches follow at residues 605 to 630 (STSS…EILP), 1148 to 1169 (LKSP…PNSE), and 1203 to 1223 (DAED…HEDV). The segment covering 1160–1169 (GGNQAQPNSE) has biased composition (polar residues). Residues 1208-1223 (VEFREGDDSNVNHEDV) show a composition bias toward basic and acidic residues. A tau/MAP repeat-like region spans residues 1227 to 1258 (DQQFRDEVDIKNKYSIIKRELEHEKLVGGGDL). Residues 1313–1372 (QEETAFRTKDEQQSSQSNDSSANASPTTDPISTGSNTSRTNDNAHIPPTDAPGFDKFMNN) are disordered. Low complexity predominate over residues 1325 to 1337 (QSSQSNDSSANAS). Residues 1338-1355 (PTTDPISTGSNTSRTNDN) show a composition bias toward polar residues.

It is found in the cytoplasm. Its subcellular location is the cytoskeleton. It localises to the spindle. Its function is as follows. Essential for the formation and/or stabilization of microtubules. Binds to microtubules in vitro. The sequence is that of MAP-homologous protein 1 (MHP1) from Saccharomyces cerevisiae (strain ATCC 204508 / S288c) (Baker's yeast).